The primary structure comprises 81 residues: Acyl carrier protein (81 aa).

In terms of domain architecture, Carrier spans 2-80 (ASNEEILAGL…DAVSFIANAQ (79 aa)). Position 40 is an O-(pantetheine 4'-phosphoryl)serine (S40).

The protein belongs to the acyl carrier protein (ACP) family. 4'-phosphopantetheine is transferred from CoA to a specific serine of apo-ACP by AcpS. This modification is essential for activity because fatty acids are bound in thioester linkage to the sulfhydryl of the prosthetic group.

It localises to the cytoplasm. It participates in lipid metabolism; fatty acid biosynthesis. Carrier of the growing fatty acid chain in fatty acid biosynthesis. The protein is Acyl carrier protein of Paenarthrobacter aurescens (strain TC1).